The sequence spans 824 residues: Leucine--tRNA ligase (824 aa).

The 'HIGH' region motif lies at proline 42 to histidine 52. A 'KMSKS' region motif is present at residues lysine 581 to serine 585. Lysine 584 contributes to the ATP binding site.

It belongs to the class-I aminoacyl-tRNA synthetase family.

The protein resides in the cytoplasm. The enzyme catalyses tRNA(Leu) + L-leucine + ATP = L-leucyl-tRNA(Leu) + AMP + diphosphate. The chain is Leucine--tRNA ligase from Citrifermentans bemidjiense (strain ATCC BAA-1014 / DSM 16622 / JCM 12645 / Bem) (Geobacter bemidjiensis).